The sequence spans 149 residues: Ribonuclease HI (149 aa).

In terms of domain architecture, RNase H type-1 spans 1–140; the sequence is MIIGYFDGLC…AYELVRRGKL (140 aa). Mg(2+) is bound by residues Asp7, Glu52, Asp76, and Asp125. Residues Asp7, Glu52, Asp76, and Asp125 each contribute to the Mn(2+) site. Cysteines 58 and 145 form a disulfide.

As to quaternary structure, monomer. The cofactor is Mn(2+). Mg(2+) serves as cofactor. Requires Co(2+) as cofactor. Ni(2+) is required as a cofactor. The disulfide bond confers considerable stability to the protein.

It is found in the cytoplasm. It catalyses the reaction Endonucleolytic cleavage to 5'-phosphomonoester.. Functionally, nuclease that specifically degrades the RNA of RNA-DNA hybrids. Endonucleolytically removes RNA primers from the Okazaki fragments of lagging strand synthesis on its own. In the presence of Mn(2+) or Co(2+) can also cleave an RNA-RNA hybrid; the dsRNase activity is 10- 100-fold lower than RNase H activity. Complements the temperature-sensitive phenotype of an E.coli double rnhA/rnhB (RNase H) disruption mutant. This is Ribonuclease HI (rnhA) from Sulfurisphaera tokodaii (strain DSM 16993 / JCM 10545 / NBRC 100140 / 7) (Sulfolobus tokodaii).